We begin with the raw amino-acid sequence, 502 residues long: Myocilin (502 aa).

The signal sequence occupies residues 1–31; sequence MPSCAYCCSCGPKMPALQLLFLACLVWGMGA. Residues 82-183 are a coiled coil; that stretch reads ADLESTKARV…QEVARLRRGQ (102 aa). The segment at 166-198 is disordered; the sequence is ARRLEGSSQEVARLRRGQCPSTHHPSQDMLPGS. N229 carries N-linked (GlcNAc...) asparagine glycosylation. One can recognise an Olfactomedin-like domain in the interval 242-501; sequence GCGVLMWVGE…MVTYDIKLSE (260 aa). Cysteines 243 and 431 form a disulfide. Ca(2+) contacts are provided by D378, N426, A427, V475, and D476.

As to quaternary structure, homodimer (via N-terminus). Can also form higher oligomers. Interacts with OLFM3, FN1, NRCAM, GLDN and NFASC. Interacts (via N-terminus) with MYL2. Interacts with SFRP1, FRZB, FZD7, FZD10, FZD1 and WIF1; regulates Wnt signaling. Interacts with SNTA1; regulates muscle hypertrophy. Interacts with ERBB2 and ERBB3; activates ERBB2-ERBB3 signaling pathway. Interacts with SNCG; affects its secretion and its aggregation. Post-translationally, palmitoylated. In terms of processing, undergoes a calcium-dependent proteolytic cleavage at Gln-225 by CAPN2 in the endoplasmic reticulum. The result is the production of two fragments, one of 35 kDa containing the C-terminal olfactomedin-like domain, and another of 20 kDa containing the N-terminal leucine zipper-like domain. Glycosylated. As to expression, highly expressed in skeletal muscle and retina. Also detected at lower levels in thyroid gland but not in other endocrine glands such as the adrenal or pituitary glands.

Its subcellular location is the secreted. The protein resides in the golgi apparatus. The protein localises to the cytoplasmic vesicle. It is found in the extracellular space. It localises to the extracellular matrix. Its subcellular location is the extracellular exosome. The protein resides in the mitochondrion. The protein localises to the mitochondrion intermembrane space. It is found in the mitochondrion inner membrane. It localises to the mitochondrion outer membrane. Its subcellular location is the rough endoplasmic reticulum. The protein resides in the cell projection. The protein localises to the cilium. It is found in the endoplasmic reticulum. Its function is as follows. Secreted glycoprotein regulating the activation of different signaling pathways in adjacent cells to control different processes including cell adhesion, cell-matrix adhesion, cytoskeleton organization and cell migration. Promotes substrate adhesion, spreading and formation of focal contacts. Negatively regulates cell-matrix adhesion and stress fiber assembly through Rho protein signal transduction. Modulates the organization of actin cytoskeleton by stimulating the formation of stress fibers through interactions with components of Wnt signaling pathways. Promotes cell migration through activation of PTK2 and the downstream phosphatidylinositol 3-kinase signaling. Plays a role in bone formation and promotes osteoblast differentiation in a dose-dependent manner through mitogen-activated protein kinase signaling. Mediates myelination in the peripheral nervous system through ERBB2/ERBB3 signaling. Plays a role as a regulator of muscle hypertrophy through the components of dystrophin-associated protein complex. Involved in positive regulation of mitochondrial depolarization. Plays a role in neurite outgrowth. May participate in the obstruction of fluid outflow in the trabecular meshwork. The polypeptide is Myocilin (Myoc) (Rattus norvegicus (Rat)).